The sequence spans 156 residues: Cytochrome c-type biogenesis protein CcmE 1 (156 aa).

The Cytoplasmic portion of the chain corresponds to 1–8 (MNATRKQR). Residues 9-29 (LWLVIGVLAAAALAVTLIVFA) form a helical; Signal-anchor for type II membrane protein membrane-spanning segment. Residues 30-156 (LQRNMSYLFT…ATVAPLTAPR (127 aa)) are Periplasmic-facing. H123 and Y127 together coordinate heme.

The protein belongs to the CcmE/CycJ family.

Its subcellular location is the cell inner membrane. Heme chaperone required for the biogenesis of c-type cytochromes. Transiently binds heme delivered by CcmC and transfers the heme to apo-cytochromes in a process facilitated by CcmF and CcmH. This Xanthomonas axonopodis pv. citri (strain 306) protein is Cytochrome c-type biogenesis protein CcmE 1.